The sequence spans 315 residues: MEKFKGNKVVLVGNGAVGSSYAFAMLNQGACDEFVIIDLNEDKAKGDAMDLNHGVVYAPSPMQVKYGTYEDCHDASLIVICAGAAQKPGETRLDLVGKNMKIFKSIVDEIMKSGFDGIFLIATNPVDVLTYAVQKFSGLPENQVIGSGTILDTARFRHLLSQEFNVSPNSVHGYIIGEHGDSELAVWSGTNIAGNSLYDILNENPEKQKLIEEIFVNTRDAAYEIIKAKGATYYGVAMGLMRISKAILNNENVVLTVSAKLNGEYGHDDVYIGVPAIINRNGIREVLETPLNTEEKEKFAKSVETLKAIQTPFFS.

NAD(+) is bound by residues Val-17, Asp-38, Lys-43, Tyr-69, and 83-84 (GA). Substrate is bound by residues Gln-86 and Arg-92. NAD(+) contacts are provided by residues Ser-105, 122-124 (ATN), and Ser-147. Residue 124–127 (NPVD) coordinates substrate. Residue 152-155 (DTAR) coordinates substrate. Arg-157 and His-172 together coordinate beta-D-fructose 1,6-bisphosphate. His-179 serves as the catalytic Proton acceptor. Residue Tyr-223 is modified to Phosphotyrosine. Thr-232 serves as a coordination point for substrate.

This sequence belongs to the LDH/MDH superfamily. LDH family. In terms of assembly, homotetramer.

The protein localises to the cytoplasm. The catalysed reaction is (S)-lactate + NAD(+) = pyruvate + NADH + H(+). It participates in fermentation; pyruvate fermentation to lactate; (S)-lactate from pyruvate: step 1/1. With respect to regulation, allosterically activated by fructose 1,6-bisphosphate (FBP). Catalyzes the conversion of lactate to pyruvate. The sequence is that of L-lactate dehydrogenase from Macrococcus caseolyticus (strain JCSC5402) (Macrococcoides caseolyticum).